Consider the following 217-residue polypeptide: Deoxyribose-phosphate aldolase (217 aa).

The Proton donor/acceptor role is filled by Asp-90. Residue Lys-152 is the Schiff-base intermediate with acetaldehyde of the active site. The active-site Proton donor/acceptor is Lys-181.

It belongs to the DeoC/FbaB aldolase family. DeoC type 1 subfamily.

Its subcellular location is the cytoplasm. The catalysed reaction is 2-deoxy-D-ribose 5-phosphate = D-glyceraldehyde 3-phosphate + acetaldehyde. Its pathway is carbohydrate degradation; 2-deoxy-D-ribose 1-phosphate degradation; D-glyceraldehyde 3-phosphate and acetaldehyde from 2-deoxy-alpha-D-ribose 1-phosphate: step 2/2. Functionally, catalyzes a reversible aldol reaction between acetaldehyde and D-glyceraldehyde 3-phosphate to generate 2-deoxy-D-ribose 5-phosphate. This Metamycoplasma hominis (Mycoplasma hominis) protein is Deoxyribose-phosphate aldolase.